The following is a 40-amino-acid chain: Photosystem II reaction center protein J (40 aa).

The helical transmembrane segment at 8 to 28 (IPLWLIGTVTGIPVIGLVGVF) threads the bilayer.

Belongs to the PsbJ family. PSII is composed of 1 copy each of membrane proteins PsbA, PsbB, PsbC, PsbD, PsbE, PsbF, PsbH, PsbI, PsbJ, PsbK, PsbL, PsbM, PsbT, PsbX, PsbY, PsbZ, Psb30/Ycf12, at least 3 peripheral proteins of the oxygen-evolving complex and a large number of cofactors. It forms dimeric complexes.

It localises to the plastid. The protein localises to the chloroplast thylakoid membrane. Its function is as follows. One of the components of the core complex of photosystem II (PSII). PSII is a light-driven water:plastoquinone oxidoreductase that uses light energy to abstract electrons from H(2)O, generating O(2) and a proton gradient subsequently used for ATP formation. It consists of a core antenna complex that captures photons, and an electron transfer chain that converts photonic excitation into a charge separation. In Lolium perenne (Perennial ryegrass), this protein is Photosystem II reaction center protein J.